Reading from the N-terminus, the 102-residue chain is Urease subunit beta (102 aa).

Belongs to the urease beta subunit family. As to quaternary structure, heterotrimer of UreA (gamma), UreB (beta) and UreC (alpha) subunits. Three heterotrimers associate to form the active enzyme.

Its subcellular location is the cytoplasm. The catalysed reaction is urea + 2 H2O + H(+) = hydrogencarbonate + 2 NH4(+). Its pathway is nitrogen metabolism; urea degradation; CO(2) and NH(3) from urea (urease route): step 1/1. This is Urease subunit beta from Opitutus terrae (strain DSM 11246 / JCM 15787 / PB90-1).